The chain runs to 307 residues: UPF0749 protein MT1871 (307 aa).

Positions Met1–Ala23 are cleaved as a signal peptide. 2 helical membrane passes run Val67–Val87 and Val152–Thr172.

The protein belongs to the UPF0749 family.

It localises to the cell membrane. This chain is UPF0749 protein MT1871, found in Mycobacterium tuberculosis (strain CDC 1551 / Oshkosh).